The following is a 165-amino-acid chain: Xanthine-guanine phosphoribosyltransferase (165 aa).

5-phospho-alpha-D-ribose 1-diphosphate is bound by residues 41 to 42 (RG) and 98 to 106 (DDLTDTGKT). Asp-99 contacts Mg(2+). The guanine site is built by Asp-102 and Ile-145. Xanthine is bound by residues Asp-102 and Ile-145. GMP contacts are provided by residues 102-106 (DTGKT) and 144-145 (WI).

It belongs to the purine/pyrimidine phosphoribosyltransferase family. XGPT subfamily. As to quaternary structure, homotetramer. The cofactor is Mg(2+).

The protein localises to the cell inner membrane. The catalysed reaction is GMP + diphosphate = guanine + 5-phospho-alpha-D-ribose 1-diphosphate. It carries out the reaction XMP + diphosphate = xanthine + 5-phospho-alpha-D-ribose 1-diphosphate. The enzyme catalyses IMP + diphosphate = hypoxanthine + 5-phospho-alpha-D-ribose 1-diphosphate. It participates in purine metabolism; GMP biosynthesis via salvage pathway; GMP from guanine: step 1/1. The protein operates within purine metabolism; XMP biosynthesis via salvage pathway; XMP from xanthine: step 1/1. Its function is as follows. Purine salvage pathway enzyme that catalyzes the transfer of the ribosyl-5-phosphate group from 5-phospho-alpha-D-ribose 1-diphosphate (PRPP) to the N9 position of the 6-oxopurines guanine and xanthine to form the corresponding ribonucleotides GMP (guanosine 5'-monophosphate) and XMP (xanthosine 5'-monophosphate), with the release of PPi. To a lesser extent, also acts on hypoxanthine. The protein is Xanthine-guanine phosphoribosyltransferase of Brucella anthropi (strain ATCC 49188 / DSM 6882 / CCUG 24695 / JCM 21032 / LMG 3331 / NBRC 15819 / NCTC 12168 / Alc 37) (Ochrobactrum anthropi).